Consider the following 121-residue polypeptide: Small ribosomal subunit protein uS13 (121 aa).

The interval R93–K121 is disordered. The span at A106 to K121 shows a compositional bias: basic residues.

Belongs to the universal ribosomal protein uS13 family. As to quaternary structure, part of the 30S ribosomal subunit. Forms a loose heterodimer with protein S19. Forms two bridges to the 50S subunit in the 70S ribosome.

Located at the top of the head of the 30S subunit, it contacts several helices of the 16S rRNA. In the 70S ribosome it contacts the 23S rRNA (bridge B1a) and protein L5 of the 50S subunit (bridge B1b), connecting the 2 subunits; these bridges are implicated in subunit movement. Contacts the tRNAs in the A and P-sites. This is Small ribosomal subunit protein uS13 from Bacillus pumilus (strain SAFR-032).